A 150-amino-acid chain; its full sequence is MQLTSQAFSYGRPIPKKYSCQGVGISPPLSFSDIPSEAKSLALIVEDPDVPANVREDGLWIHWIVYNLSPIVSNLAEGAQIFAVQGINTAGEIGYCPPCPPDAKHRYYFYAYALDVVLPEEEGVTKEQLLEAMEGHILATAELMGTYEQD.

This sequence belongs to the UPF0098 family.

This Chlamydia muridarum (strain MoPn / Nigg) protein is UPF0098 protein TC_0109.